The primary structure comprises 350 residues: Cephaeline 6'-O-methyltransferase IpeOMT1 (350 aa).

The S-adenosyl-L-methionine site is built by G193, D216, D236, M237, and K250. Catalysis depends on H254, which acts as the Proton acceptor.

This sequence belongs to the class I-like SAM-binding methyltransferase superfamily. Cation-independent O-methyltransferase family. In terms of tissue distribution, expressed in roots.

It localises to the cytoplasm. Its subcellular location is the cytosol. The enzyme catalyses cephaeline + S-adenosyl-L-methionine = emetine + S-adenosyl-L-homocysteine + H(+). It carries out the reaction deacetylisoipecoside + S-adenosyl-L-methionine = 6-O-methyldeacetylisoipecoside + S-adenosyl-L-homocysteine + H(+). It catalyses the reaction 7-O-methyldeacetylisoipecoside + S-adenosyl-L-methionine = 6,7-O,O-dimethyldeacetylisoipecoside + S-adenosyl-L-homocysteine + H(+). The catalysed reaction is norcoclaurine + S-adenosyl-L-methionine = coclaurine + S-adenosyl-L-homocysteine + H(+). The enzyme catalyses (S)-norprotosinomenine + S-adenosyl-L-methionine = (S)-6-O-methylnorprotosinomenine + S-adenosyl-L-homocysteine + H(+). It carries out the reaction (R)-norprotosinomenine + S-adenosyl-L-methionine = (R)-6-O-methylnorprotosinomenine + S-adenosyl-L-homocysteine + H(+). It functions in the pathway alkaloid biosynthesis. In terms of biological role, O-methyltransferase involved in the biosynthesis of ipecac and benzylisoquinoline monoterpenoid-isoquinoline alkaloids natural products, starting by the condensation of dopamine and secologanin, and including emetine and cephaeline, drugs used both as anti-protozoal (e.g. treatment of ameobiasis) and as emetic agents. Mediates cephaeline 6'-O-methylation to produce emetine. Catalyzes the 6-O-methylation of N-deacetylisoipecoside, 7-O-methyl-N-deacetylisoipecoside, isococlaurine, norcoclaurine, (S)-norprotosinomenine and (R)-norprotosinomenine, and, with a lower efficiency, of 4'-O-methyllaudanosoline, isoorientaline and protosinomenine. Supports also the 4'-O-methylation of nororientaline. This chain is Cephaeline 6'-O-methyltransferase IpeOMT1, found in Carapichea ipecacuanha (Ipecac).